Reading from the N-terminus, the 695-residue chain is Serotransferrin (695 aa).

Residues 1 to 19 form the signal peptide; that stretch reads MRLAAGALLACAALGLCLA. Transferrin-like domains lie at 25–347 and 361–680; these read VRWC…NLRE and VKWC…NLRK. 2 disulfide bridges follow: Cys28–Cys67 and Cys38–Cys58. Dimethylated arginine is present on Arg42. Positions 82 and 114 each coordinate Fe(3+). Cystine bridges form between Cys137–Cys213, Cys156–Cys350, Cys177–Cys193, Cys180–Cys196, Cys190–Cys198, Cys246–Cys260, Cys358–Cys612, Cys364–Cys396, Cys374–Cys387, Cys421–Cys690, Cys436–Cys653, Cys468–Cys539, Cys492–Cys681, Cys502–Cys516, Cys513–Cys522, Cys579–Cys593, and Cys631–Cys636. Residues Thr139, Arg143, Ala145, and Gly146 each coordinate hydrogencarbonate. Tyr207 contributes to the Fe(3+) binding site. His268 serves as a coordination point for Fe(3+). Position 389 is a phosphoserine (Ser389). Residues Asp411 and Tyr444 each coordinate Fe(3+). 4 residues coordinate hydrogencarbonate: Thr470, Arg474, Ala476, and Gly477. Asn509 carries N-linked (GlcNAc...) asparagine glycosylation. Position 533 (Tyr533) interacts with Fe(3+). A Fe(3+)-binding site is contributed by His601. A Phosphoserine modification is found at Ser682.

This sequence belongs to the transferrin family. Monomer. Part of a complex composed of SLC40A1/ferroportin, TF/transferrin and HEPH/hephaestin that transfers iron from cells to transferrin. As to expression, expressed by the liver and secreted in plasma.

It is found in the secreted. In terms of biological role, transferrins are iron binding transport proteins which can bind two Fe(3+) ions in association with the binding of an anion, usually bicarbonate. It is responsible for the transport of iron from sites of absorption and heme degradation to those of storage and utilization. Serum transferrin may also have a further role in stimulating cell proliferation. This is Serotransferrin (TF) from Oryctolagus cuniculus (Rabbit).